The sequence spans 226 residues: Cytidylate kinase (226 aa).

ATP is bound at residue 10 to 18; that stretch reads GPASSGKST.

It belongs to the cytidylate kinase family. Type 1 subfamily.

It is found in the cytoplasm. The catalysed reaction is CMP + ATP = CDP + ADP. The enzyme catalyses dCMP + ATP = dCDP + ADP. The protein is Cytidylate kinase of Streptococcus thermophilus (strain CNRZ 1066).